Here is a 296-residue protein sequence, read N- to C-terminus: Ribosomal RNA small subunit methyltransferase H (296 aa).

S-adenosyl-L-methionine-binding positions include Gly38 to His40, Glu57, Phe80, Asp103, and His110.

The protein belongs to the methyltransferase superfamily. RsmH family.

Its subcellular location is the cytoplasm. It catalyses the reaction cytidine(1402) in 16S rRNA + S-adenosyl-L-methionine = N(4)-methylcytidine(1402) in 16S rRNA + S-adenosyl-L-homocysteine + H(+). Functionally, specifically methylates the N4 position of cytidine in position 1402 (C1402) of 16S rRNA. The protein is Ribosomal RNA small subunit methyltransferase H of Borrelia garinii subsp. bavariensis (strain ATCC BAA-2496 / DSM 23469 / PBi) (Borreliella bavariensis).